The chain runs to 258 residues: Acetylglutamate kinase (258 aa).

Substrate-binding positions include 44 to 45, R66, and N158; that span reads GG. Residues 181–186 and 209–211 contribute to the ATP site; these read DISSIL and IIT.

It belongs to the acetylglutamate kinase family. ArgB subfamily. Homodimer.

The protein resides in the cytoplasm. The catalysed reaction is N-acetyl-L-glutamate + ATP = N-acetyl-L-glutamyl 5-phosphate + ADP. The protein operates within amino-acid biosynthesis; L-arginine biosynthesis; N(2)-acetyl-L-ornithine from L-glutamate: step 2/4. Functionally, catalyzes the ATP-dependent phosphorylation of N-acetyl-L-glutamate. This chain is Acetylglutamate kinase, found in Buchnera aphidicola subsp. Schizaphis graminum (strain Sg).